The sequence spans 179 residues: M-zodatoxin-Lt4b (179 aa).

The first 22 residues, 1–22, serve as a signal peptide directing secretion; the sequence is MKFSIIALALAVAFVCVAESRS. Positions 23-43 are excised as a propeptide; the sequence is EEEGYDVSEEIQAEELEEAAR. The short motif at 40–43 is the Processing quadruplet motif 1 element; it reads EAAR. Gln-61 is subject to Glutamine amide. Residues 63-66 carry the Inverted processing quadruplet motif 1 motif; sequence REDS. Residues 63-71 constitute a propeptide that is removed on maturation; it reads REDSEDAGR. The short motif at 68–71 is the Processing quadruplet motif 2 element; sequence DAGR. Position 89 is a glutamine amide (Gln-89). Residues 91–94 carry the Inverted processing quadruplet motif 2 motif; sequence REDT. A propeptide spanning residues 91 to 99 is cleaved from the precursor; the sequence is REDTEEAGR. The Processing quadruplet motif 3 signature appears at 96–99; sequence EAGR. Glutamine amide is present on Gln-117. The Inverted processing quadruplet motif 3 motif lies at 119–122; the sequence is REDS. Residues 119 to 127 constitute a propeptide that is removed on maturation; that stretch reads REDSEEAGR. Residues 124–127 carry the Processing quadruplet motif 4 motif; that stretch reads EAGR. A Glutamine amide modification is found at Gln-145. Positions 147-150 match the Inverted processing quadruplet motif 4 motif; it reads REDT. Positions 147-154 are excised as a propeptide; that stretch reads REDTEEAR. Positions 151–154 match the Processing quadruplet motif 5 motif; sequence EEAR. Phe-178 is subject to Phenylalanine amide.

The protein belongs to the cationic peptide 03 (latarcin) family. 04 subfamily. Post-translationally, cleavage of the propeptide depends on the processing quadruplet motif (PQM) (XXXR, with at least one of X being E) and the inverted PQM (RXXX, with at least one of X being E). Expressed by the venom gland.

It localises to the secreted. In terms of biological role, M-zodatoxin-Lt4b: Has antimicrobial activity against Gram-positive bacteria (A.globiformis VKM Ac-1112 (MIC=0.3 uM), and B.subtilis VKM B-501 (MIC=1.1 uM)), Gram-negative bacteria (E.coli DH5-alpha (MIC=4.4 uM), E.coli MH1 (MIC=4.4 uM), and P.aeruginosa PAO1 (MIC=&gt;35 uM)), and yeasts (P.pastoris GS115 (MIC=&gt;35 uM), and S.cerevisiae Y190 (MIC=35 uM)). Does not have hemolytic activity against rabbit erythrocytes. Causes paralysis, but is not lethal when injected into insect (M.domestica) larvae. Shows no antimicrobial activity against Gram-positive bacterium B.subtilis B-501 or Gram-negative bacterium E.coli DH5-alpha at concentration up to 20 uM. This Lachesana tarabaevi (Spider) protein is M-zodatoxin-Lt4b.